We begin with the raw amino-acid sequence, 259 residues long: 5'-nucleotidase SurE (259 aa).

Residues aspartate 8, aspartate 9, serine 40, and asparagine 92 each contribute to the a divalent metal cation site.

It belongs to the SurE nucleotidase family. A divalent metal cation is required as a cofactor.

The protein resides in the cytoplasm. The enzyme catalyses a ribonucleoside 5'-phosphate + H2O = a ribonucleoside + phosphate. Nucleotidase that shows phosphatase activity on nucleoside 5'-monophosphates. The protein is 5'-nucleotidase SurE of Xanthomonas campestris pv. campestris (strain B100).